A 91-amino-acid chain; its full sequence is Large ribosomal subunit protein eL43 (91 aa).

The C4-type zinc-finger motif lies at 38-59 (CNFCGKDSLKRKAAGIWECKAC).

The protein belongs to the eukaryotic ribosomal protein eL43 family.

In Schistosoma mansoni (Blood fluke), this protein is Large ribosomal subunit protein eL43.